A 404-amino-acid polypeptide reads, in one-letter code: Probable tRNA sulfurtransferase (404 aa).

Residues glutamate 61–glutamate 166 enclose the THUMP domain. Residues leucine 184–leucine 185, histidine 209–phenylalanine 210, arginine 266, glycine 288, and glutamine 297 contribute to the ATP site.

This sequence belongs to the ThiI family.

Its subcellular location is the cytoplasm. The enzyme catalyses [ThiI sulfur-carrier protein]-S-sulfanyl-L-cysteine + a uridine in tRNA + 2 reduced [2Fe-2S]-[ferredoxin] + ATP + H(+) = [ThiI sulfur-carrier protein]-L-cysteine + a 4-thiouridine in tRNA + 2 oxidized [2Fe-2S]-[ferredoxin] + AMP + diphosphate. It carries out the reaction [ThiS sulfur-carrier protein]-C-terminal Gly-Gly-AMP + S-sulfanyl-L-cysteinyl-[cysteine desulfurase] + AH2 = [ThiS sulfur-carrier protein]-C-terminal-Gly-aminoethanethioate + L-cysteinyl-[cysteine desulfurase] + A + AMP + 2 H(+). The protein operates within cofactor biosynthesis; thiamine diphosphate biosynthesis. Its function is as follows. Catalyzes the ATP-dependent transfer of a sulfur to tRNA to produce 4-thiouridine in position 8 of tRNAs, which functions as a near-UV photosensor. Also catalyzes the transfer of sulfur to the sulfur carrier protein ThiS, forming ThiS-thiocarboxylate. This is a step in the synthesis of thiazole, in the thiamine biosynthesis pathway. The sulfur is donated as persulfide by IscS. The sequence is that of Probable tRNA sulfurtransferase from Bacillus cereus (strain AH820).